We begin with the raw amino-acid sequence, 987 residues long: Leucine--tRNA ligase (987 aa).

Residues 69 to 80 (PYPSGKGLHVGH) carry the 'HIGH' region motif. A 'KMSKS' region motif is present at residues 760-764 (KMGKS). Residue Lys763 coordinates ATP.

This sequence belongs to the class-I aminoacyl-tRNA synthetase family.

It localises to the cytoplasm. It catalyses the reaction tRNA(Leu) + L-leucine + ATP = L-leucyl-tRNA(Leu) + AMP + diphosphate. The polypeptide is Leucine--tRNA ligase (Bifidobacterium longum (strain NCC 2705)).